We begin with the raw amino-acid sequence, 123 residues long: Ribonuclease P protein component (123 aa).

This sequence belongs to the RnpA family. Consists of a catalytic RNA component (M1 or rnpB) and a protein subunit.

The enzyme catalyses Endonucleolytic cleavage of RNA, removing 5'-extranucleotides from tRNA precursor.. RNaseP catalyzes the removal of the 5'-leader sequence from pre-tRNA to produce the mature 5'-terminus. It can also cleave other RNA substrates such as 4.5S RNA. The protein component plays an auxiliary but essential role in vivo by binding to the 5'-leader sequence and broadening the substrate specificity of the ribozyme. This is Ribonuclease P protein component from Streptomyces bikiniensis.